The chain runs to 118 residues: Small ribosomal subunit protein uS13 (118 aa).

The tract at residues H91 to K118 is disordered.

It belongs to the universal ribosomal protein uS13 family. In terms of assembly, part of the 30S ribosomal subunit. Forms a loose heterodimer with protein S19. Forms two bridges to the 50S subunit in the 70S ribosome.

In terms of biological role, located at the top of the head of the 30S subunit, it contacts several helices of the 16S rRNA. In the 70S ribosome it contacts the 23S rRNA (bridge B1a) and protein L5 of the 50S subunit (bridge B1b), connecting the 2 subunits; these bridges are implicated in subunit movement. Contacts the tRNAs in the A and P-sites. This Methylococcus capsulatus (strain ATCC 33009 / NCIMB 11132 / Bath) protein is Small ribosomal subunit protein uS13.